Consider the following 300-residue polypeptide: Transcription factor DUO1 (300 aa).

HTH myb-type domains follow at residues 8–64 (KEEI…RPNL) and 65–116 (KNGC…KRLA). 2 DNA-binding regions (H-T-H motif) span residues 36–60 (WSSI…VNKL) and 89–112 (WARI…SSRQ). A compositionally biased stretch (low complexity) spans 123–135 (SDASSSSFNPKSS). Positions 123-145 (SDASSSSFNPKSSSSHRLKGKNV) are disordered. Positions 136–145 (SSHRLKGKNV) are enriched in basic residues.

In terms of tissue distribution, confined to inflorescences, especially in stamens and pollen.

It localises to the nucleus. In terms of biological role, transcription activator that acts as a positive regulator of male germline development by promoting both gametic cell specification and cell cycle progression. Binds to canonical MYB sites 5'-AACCGTC-3', 5'-AAACCGC-3' and 5'-AACCGT-3' in promoters to trigger the expression of male germline-specific or enriched genes (e.g. MGH3, GEX2 and GCS1), including those required for fertilization. Required for sperm cell specification leading to pollen maturation by activating a germline-specific regulon. Involved in pollen mitosis entry at G2-M transition via the regulation of CYCB1-1, DAZ1 and DAZ2 expression. The protein is Transcription factor DUO1 of Arabidopsis thaliana (Mouse-ear cress).